A 319-amino-acid chain; its full sequence is ATP-dependent 6-phosphofructokinase (319 aa).

Gly-11 contributes to the ATP binding site. 21 to 25 (RAVVR) is a binding site for ADP. ATP contacts are provided by residues 72-73 (RC) and 102-105 (GDGS). Asp-103 contributes to the Mg(2+) binding site. 125–127 (TID) is a substrate binding site. Catalysis depends on Asp-127, which acts as the Proton acceptor. Residue Arg-154 coordinates ADP. Substrate-binding positions include Arg-162 and 169–171 (MGR). Residues 185–187 (GAE), Arg-211, and 213–215 (KKH) each bind ADP. Residues Glu-222, Arg-243, and 249-252 (HVQR) each bind substrate.

This sequence belongs to the phosphofructokinase type A (PFKA) family. ATP-dependent PFK group I subfamily. Prokaryotic clade 'B1' sub-subfamily. Homotetramer. Mg(2+) serves as cofactor.

It localises to the cytoplasm. It carries out the reaction beta-D-fructose 6-phosphate + ATP = beta-D-fructose 1,6-bisphosphate + ADP + H(+). The protein operates within carbohydrate degradation; glycolysis; D-glyceraldehyde 3-phosphate and glycerone phosphate from D-glucose: step 3/4. With respect to regulation, allosterically activated by ADP and other diphosphonucleosides, and allosterically inhibited by phosphoenolpyruvate. Functionally, catalyzes the phosphorylation of D-fructose 6-phosphate to fructose 1,6-bisphosphate by ATP, the first committing step of glycolysis. This chain is ATP-dependent 6-phosphofructokinase, found in Bacillus cereus (strain B4264).